The chain runs to 76 residues: Large ribosomal subunit protein uL29 (76 aa).

It belongs to the universal ribosomal protein uL29 family.

The sequence is that of Large ribosomal subunit protein uL29 from Corynebacterium efficiens (strain DSM 44549 / YS-314 / AJ 12310 / JCM 11189 / NBRC 100395).